Reading from the N-terminus, the 636-residue chain is Probable Xaa-Pro aminopeptidase P (636 aa).

Mn(2+) contacts are provided by Asp-414, Asp-425, Glu-523, and Glu-537.

It belongs to the peptidase M24B family. Requires Mn(2+) as cofactor.

The enzyme catalyses Release of any N-terminal amino acid, including proline, that is linked to proline, even from a dipeptide or tripeptide.. In terms of biological role, catalyzes the removal of a penultimate prolyl residue from the N-termini of peptides. The polypeptide is Probable Xaa-Pro aminopeptidase P (AMPP) (Ajellomyces capsulatus (strain H143) (Darling's disease fungus)).